The sequence spans 84 residues: Sporulation-specific transcription factor SpoVIF (84 aa).

The protein resides in the cytoplasm. In terms of biological role, transcription factor involved in spore coat assembly and spore resistance. Required for gene regulation during the latter stages of sporulation. Regulates the transcription of at least cgeA, cotG and cotS. May directly or indirectly control the function of the GerE protein. The polypeptide is Sporulation-specific transcription factor SpoVIF (Bacillus subtilis (strain 168)).